Consider the following 214-residue polypeptide: Probable transaldolase (214 aa).

Lysine 83 serves as the catalytic Schiff-base intermediate with substrate.

It belongs to the transaldolase family. Type 3B subfamily.

The protein resides in the cytoplasm. The enzyme catalyses D-sedoheptulose 7-phosphate + D-glyceraldehyde 3-phosphate = D-erythrose 4-phosphate + beta-D-fructose 6-phosphate. It participates in carbohydrate degradation; pentose phosphate pathway; D-glyceraldehyde 3-phosphate and beta-D-fructose 6-phosphate from D-ribose 5-phosphate and D-xylulose 5-phosphate (non-oxidative stage): step 2/3. Transaldolase is important for the balance of metabolites in the pentose-phosphate pathway. The polypeptide is Probable transaldolase (Leptospira borgpetersenii serovar Hardjo-bovis (strain JB197)).